A 228-amino-acid polypeptide reads, in one-letter code: Sodium channel regulatory subunit beta-4 (228 aa).

Residues 1–30 (MSRAGNRGNTQARWLGTGLLGLFLLPMYLS) form the signal peptide. In terms of domain architecture, Ig-like C2-type spans 31-148 (LEVSVGKATT…KDLNNSATIF (118 aa)). At 31–161 (LEVSVGKATT…VDKLEKVDNT (131 aa)) the chain is on the extracellular side. 4 N-linked (GlcNAc...) asparagine glycosylation sites follow: N45, N71, N113, and N142. C53 and C131 are joined by a disulfide. A helical membrane pass occupies residues 162–182 (VTLIILAVVGGVIGLLVCILL). The Cytoplasmic portion of the chain corresponds to 183–228 (LKKLITFILKKTREKKKECLVSSSGNDNTENGLPGSKAEEKPPTKV). The disordered stretch occupies residues 199 to 228 (KECLVSSSGNDNTENGLPGSKAEEKPPTKV). Residues 203–213 (VSSSGNDNTEN) are compositionally biased toward polar residues. Positions 219–228 (KAEEKPPTKV) are enriched in basic and acidic residues.

It belongs to the sodium channel auxiliary subunit SCN4B (TC 8.A.17) family. In terms of assembly, a voltage-gated sodium (Nav) channel consists of an ion-conducting pore-forming alpha subunit functional on its own that is regulated by one or more beta subunits. The beta subunit SCN4B is disulfide-linked to the pore-forming alpha subunit. Interacts with SCN1A; regulatory subunit of SCN1A/Nav1.1. Interacts with SCN2A; regulatory subunit of SCN2A/Nav1.2. Post-translationally, contains an interchain disulfide bond with SCN2A.

It localises to the cell membrane. In terms of biological role, regulatory subunit of multiple voltage-gated sodium (Nav) channels directly mediating the depolarization of excitable membranes. Navs, also called VGSCs (voltage-gated sodium channels) or VDSCs (voltage-dependent sodium channels), operate by switching between closed and open conformations depending on the voltage difference across the membrane. In the open conformation they allow Na(+) ions to selectively pass through the pore, along their electrochemical gradient. The influx of Na+ ions provokes membrane depolarization, initiating the propagation of electrical signals throughout cells and tissues. The accessory beta subunits participate in localization and functional modulation of the Nav channels. Modulates the activity of SCN1A/Nav1.1. Modulates the activity of SCN2A/Nav1.2. The polypeptide is Sodium channel regulatory subunit beta-4 (Mus musculus (Mouse)).